A 215-amino-acid chain; its full sequence is Small ribosomal subunit protein eS1 (215 aa).

The interval 195–215 (SGMQEPQKNEPAPGGEAIAQN) is disordered.

The protein belongs to the eukaryotic ribosomal protein eS1 family.

This chain is Small ribosomal subunit protein eS1, found in Thermoplasma acidophilum (strain ATCC 25905 / DSM 1728 / JCM 9062 / NBRC 15155 / AMRC-C165).